Here is a 40-residue protein sequence, read N- to C-terminus: Natriuretic peptide HsNP-b (40 aa).

Residues 1–8 (SGSKTAKI) constitute a propeptide that is removed on maturation. The disordered stretch occupies residues 1 to 40 (SGSKTAKIGDGCFGVPIDHIGSTTDLGCGRPRPKPTPRGS). The cysteines at positions 12 and 28 are disulfide-linked. The span at 31-40 (PRPKPTPRGS) shows a compositional bias: basic residues.

It belongs to the natriuretic peptide family. Expressed by the venom gland.

It localises to the secreted. In terms of biological role, snake venom natriuretic peptide that targets both NPR1 and NPR2. Exhibits hypotensive and vasodepressor activities. The chain is Natriuretic peptide HsNP-b from Hoplocephalus stephensii (Stephens's banded snake).